An 88-amino-acid polypeptide reads, in one-letter code: Putative membrane protein insertion efficiency factor (88 aa).

It belongs to the UPF0161 family.

The protein resides in the cell inner membrane. In terms of biological role, could be involved in insertion of integral membrane proteins into the membrane. The sequence is that of Putative membrane protein insertion efficiency factor from Burkholderia vietnamiensis (strain G4 / LMG 22486) (Burkholderia cepacia (strain R1808)).